We begin with the raw amino-acid sequence, 650 residues long: Primary amine oxidase 1 (650 aa).

The N-terminal stretch at 1–19 is a signal peptide; sequence MNTSILAILFLIQCVFTLG. Residues Asn2, Asn34, Asn62, and Asn149 are each glycosylated (N-linked (GlcNAc...) asparagine). A disulfide bond links Cys155 and Cys176. A glycan (N-linked (GlcNAc...) asparagine) is linked at Asn235. A substrate-binding site is contributed by 308–319; it reads FMDIGEFGFGRS. Asp310 functions as the Proton acceptor in the catalytic mechanism. A disulfide bridge links Cys329 with Cys355. 395–400 serves as a coordination point for substrate; the sequence is LGNYDY. The active-site Schiff-base intermediate with substrate; via topaquinone is Tyr398. Tyr398 is subject to 2',4',5'-topaquinone. Residues His453 and His455 each contribute to the Cu cation site. Residues Asp462 and Asp464 each coordinate Mn(2+). An N-linked (GlcNAc...) asparagine glycan is attached at Asn486. Mn(2+) contacts are provided by Asp607 and Ile608. His618 contacts Cu cation.

The protein belongs to the copper/topaquinone oxidase family. In terms of assembly, homodimer. L-topaquinone is required as a cofactor. It depends on Cu cation as a cofactor. Requires Zn(2+) as cofactor. Mn(2+) serves as cofactor. Post-translationally, topaquinone (TPQ) is generated by copper-dependent autoxidation of a specific tyrosyl residue. As to expression, expressed in the vascular tissues at the division/differentiation transition zone.

It is found in the secreted. It catalyses the reaction a primary methyl amine + O2 + H2O = an aldehyde + H2O2 + NH4(+). Its activity is regulated as follows. Repressed by semi-carbazide, a specific and irreversible inhibitor of copper amine oxidases. In terms of biological role, oxidizes preferentially the aliphatic diamine putrescine with production of the corresponding aldehyde, ammonia and hydrogen peroxide. May be involved in the regulation of developmental programmed cell death (PCD) in both vascular tissue and the root cap. Required for jasmonic acid-(MeJA) mediated early protoxylem differentiation associated with putrescine levels reduction and H(2)O(2) accumulation in roots. The sequence is that of Primary amine oxidase 1 from Arabidopsis thaliana (Mouse-ear cress).